The chain runs to 388 residues: Na(+)/H(+) antiporter NhaA (388 aa).

11 helical membrane passes run 14 to 34, 59 to 79, 95 to 115, 125 to 145, 154 to 174, 179 to 199, 219 to 239, 254 to 274, 292 to 312, 328 to 348, and 360 to 380; these read GGIILIIAAALAMLMANMGAT, MLLWINDALMAVFFLLIGLEV, AFPVIAAIGGMIVPALLYLAF, GWAIPAATDIAFALGVLALLG, IFLMALAIIDDLGAIVIIALF, LSIVSLGVAAFAIAVLALLNL, VLKSGVHATLAGVIVGFFIPL, VLHPWVAYLILPLFAFANAGV, IIAGLLIGKPLGISLFCWLAL, IMAVGILCGIGFTMSIFIASL, and WAKLGILIGSLLSAVVGYSWL.

This sequence belongs to the NhaA Na(+)/H(+) (TC 2.A.33) antiporter family.

The protein localises to the cell inner membrane. It catalyses the reaction Na(+)(in) + 2 H(+)(out) = Na(+)(out) + 2 H(+)(in). In terms of biological role, na(+)/H(+) antiporter that extrudes sodium in exchange for external protons. This Salmonella choleraesuis (strain SC-B67) protein is Na(+)/H(+) antiporter NhaA.